We begin with the raw amino-acid sequence, 366 residues long: Histidinol-phosphate aminotransferase (366 aa).

At K227 the chain carries N6-(pyridoxal phosphate)lysine.

This sequence belongs to the class-II pyridoxal-phosphate-dependent aminotransferase family. Histidinol-phosphate aminotransferase subfamily. In terms of assembly, homodimer. Requires pyridoxal 5'-phosphate as cofactor.

It catalyses the reaction L-histidinol phosphate + 2-oxoglutarate = 3-(imidazol-4-yl)-2-oxopropyl phosphate + L-glutamate. Its pathway is amino-acid biosynthesis; L-histidine biosynthesis; L-histidine from 5-phospho-alpha-D-ribose 1-diphosphate: step 7/9. In Campylobacter hominis (strain ATCC BAA-381 / DSM 21671 / CCUG 45161 / LMG 19568 / NCTC 13146 / CH001A), this protein is Histidinol-phosphate aminotransferase.